Here is a 368-residue protein sequence, read N- to C-terminus: Probable deoxyhypusine synthase (368 aa).

NAD(+) is bound by residues Ser100–Ser104, Thr126–Gly128, Glu132, and Asp233. Spermidine is bound at residue Glu131–Glu132. Spermidine is bound at residue Asp238. NAD(+) is bound at residue Gly278. His283 lines the spermidine pocket. Thr303 to Ala304 contributes to the NAD(+) binding site. Spermidine contacts are provided by residues Gly309–Asp311 and Glu318–Lys324. Lys324 functions as the Nucleophile in the catalytic mechanism. Position 337-338 (Glu337–Ala338) interacts with NAD(+).

It belongs to the deoxyhypusine synthase family. It depends on NAD(+) as a cofactor.

It carries out the reaction [eIF5A protein]-L-lysine + spermidine = [eIF5A protein]-deoxyhypusine + propane-1,3-diamine. Its pathway is protein modification; eIF5A hypusination. Functionally, catalyzes the NAD-dependent oxidative cleavage of spermidine and the subsequent transfer of the butylamine moiety of spermidine to the epsilon-amino group of a specific lysine residue of the eIF-5A precursor protein to form the intermediate deoxyhypusine residue. In Drosophila melanogaster (Fruit fly), this protein is Probable deoxyhypusine synthase.